We begin with the raw amino-acid sequence, 468 residues long: MMSSRLNAGAMAVPAAAVAADVVDFGYAAPMPPPYVGFDPAGMGGERQLFQHGGACHGLYDGGLDFSAAAAFQEAATLGVGLPGGNLLQSLAPPAAAAATPSSLQMPMMMSLPGLPATAADVYPFGGGGFVKREDGPVLDVVGGGGGGRIGLNLGRRTYFSPADVLAVDRLLLRSRLGGMGMEMGMGMGVLGLGLAAAAHHHQPPRCQAEGCKADLSAAKHYHRRHKVCDFHAKAAAVLAAGKQQRFCQQCSRFHVLAEFDEAKRSCRKRLTEHNRRRRKPTAGGQSSKDSPPPPPSKKGTDASIASSYTSCDHHKAAASTTTASGVSCLQELADHHDVGGGHQAAMAAAPPPTLSLAALPPQEEDDEDEDGGLGNVLMMQQHHQRRRLQHDGDGDDDVAAAAAHHHLMRSLARQQQQHRHSSGCSNNNDGDDDDHNNNNNILSCSSASDQQNSSNNNNMHFFEVDFI.

Residues 204-281 (PPRCQAEGCK…TEHNRRRRKP (78 aa)) form an SBP-type zinc finger. Zn(2+)-binding residues include Cys-207, Cys-212, Cys-229, His-232, Cys-248, Cys-251, His-255, and Cys-267. Residues 264–280 (KRSCRKRLTEHNRRRRK) carry the Bipartite nuclear localization signal motif. Disordered regions lie at residues 270–305 (RLTE…DASI), 354–374 (TLSL…DGGL), and 405–458 (HHHL…SNNN). A compositionally biased stretch (acidic residues) spans 363-372 (QEEDDEDEDG). Residues 438-458 (NNNNILSCSSASDQQNSSNNN) are compositionally biased toward low complexity.

Ubiquitous.

It is found in the nucleus. In terms of biological role, trans-acting factor that binds specifically to the consensus nucleotide sequence 5'-TNCGTACAA-3'. The polypeptide is Squamosa promoter-binding-like protein 5 (SPL5) (Oryza sativa subsp. japonica (Rice)).